The following is a 193-amino-acid chain: dCTP deaminase (193 aa).

DCTP-binding positions include 110–115 (RSSLAR), aspartate 128, 136–138 (VLE), tyrosine 171, lysine 178, and glutamine 182. Glutamate 138 acts as the Proton donor/acceptor in catalysis. Positions 173-193 (KRKNAKYKDQQDAVASRISQD) are disordered.

This sequence belongs to the dCTP deaminase family. As to quaternary structure, homotrimer.

The catalysed reaction is dCTP + H2O + H(+) = dUTP + NH4(+). It functions in the pathway pyrimidine metabolism; dUMP biosynthesis; dUMP from dCTP (dUTP route): step 1/2. Catalyzes the deamination of dCTP to dUTP. This is dCTP deaminase from Shewanella sp. (strain ANA-3).